A 155-amino-acid chain; its full sequence is Large ribosomal subunit protein eL24 (155 aa).

The segment at 92 to 155 (AKRNMKPEVR…KSAPRVGGKR (64 aa)) is disordered. Positions 96–117 (MKPEVRKAQRDQAIKAAKEQKK) are enriched in basic and acidic residues. A compositionally biased stretch (low complexity) spans 124-133 (KASAPAPKAK).

This sequence belongs to the eukaryotic ribosomal protein eL24 family.

The protein is Large ribosomal subunit protein eL24 (RpL24) of Spodoptera frugiperda (Fall armyworm).